The following is a 91-amino-acid chain: Small ribosomal subunit protein uS19 (91 aa).

It belongs to the universal ribosomal protein uS19 family.

Functionally, protein S19 forms a complex with S13 that binds strongly to the 16S ribosomal RNA. The chain is Small ribosomal subunit protein uS19 from Ralstonia nicotianae (strain ATCC BAA-1114 / GMI1000) (Ralstonia solanacearum).